The primary structure comprises 96 residues: Protein RnfH (96 aa).

Belongs to the UPF0125 (RnfH) family.

This is Protein RnfH from Citrobacter koseri (strain ATCC BAA-895 / CDC 4225-83 / SGSC4696).